We begin with the raw amino-acid sequence, 206 residues long: Thymidylate kinase (206 aa).

11-18 (GIDGAGKT) contributes to the ATP binding site.

This sequence belongs to the thymidylate kinase family.

It catalyses the reaction dTMP + ATP = dTDP + ADP. In terms of biological role, phosphorylation of dTMP to form dTDP in both de novo and salvage pathways of dTTP synthesis. This Burkholderia lata (strain ATCC 17760 / DSM 23089 / LMG 22485 / NCIMB 9086 / R18194 / 383) protein is Thymidylate kinase.